Here is a 520-residue protein sequence, read N- to C-terminus: NADH-quinone oxidoreductase subunit N (520 aa).

14 helical membrane passes run 13-33 (ALLPEMLLSGGAMLLLLASVW), 55-75 (FGVILCLVVGLAVVIAWGDGA), 87-107 (GFRWAVDLVILLGTALALMLL), 115-135 (AAFGPEVPSLMLLASTGMMVL), 141-161 (LMFVFLGVELMSLAVYVLAGV), 176-196 (FLLGAISSGFLLYGMALLFGA), 219-239 (FMSGVALLLVGLAFKVAAAPF), 250-270 (APLPVTAFMSATVKTAAFAVF), 285-305 (WHMGLWWLAAVTMVVGNVFAL), 313-333 (MLAYSSIAHAGYLLVSIIVGD), 339-359 (ALIFYVVSYTLATMGAFGVLI), 383-403 (WLAIAMTVFLLAFMGMPVLGG), 425-445 (ILAVVLVIASAVSAAYYLAVV), and 468-488 (SLIATAAVALLVFGLYPTPIM). Over residues 494-508 (ATTTTSPTSNPAAPR) the composition is skewed to low complexity. The tract at residues 494-520 (ATTTTSPTSNPAAPRGEVRLQTASVPR) is disordered.

Belongs to the complex I subunit 2 family. NDH-1 is composed of 14 different subunits. Subunits NuoA, H, J, K, L, M, N constitute the membrane sector of the complex.

Its subcellular location is the cell inner membrane. The enzyme catalyses a quinone + NADH + 5 H(+)(in) = a quinol + NAD(+) + 4 H(+)(out). Its function is as follows. NDH-1 shuttles electrons from NADH, via FMN and iron-sulfur (Fe-S) centers, to quinones in the respiratory chain. The immediate electron acceptor for the enzyme in this species is believed to be ubiquinone. Couples the redox reaction to proton translocation (for every two electrons transferred, four hydrogen ions are translocated across the cytoplasmic membrane), and thus conserves the redox energy in a proton gradient. The protein is NADH-quinone oxidoreductase subunit N of Gemmatimonas aurantiaca (strain DSM 14586 / JCM 11422 / NBRC 100505 / T-27).